The following is a 115-amino-acid chain: MTTSFYFLLMALGLLLYVCQSSFGNQHTRTFDTPKHRCGSEITNSYMDLCYRKRNDAGEKRGRASPLWQRRGFLSKLKARAKRNGAFHLPRDGRGVVEHCCHRPCSNAEFRKYCG.

Positions 1–24 are cleaved as a signal peptide; that stretch reads MTTSFYFLLMALGLLLYVCQSSFG. The propeptide occupies 25 to 29; the sequence is NQHTR. Residue Pro34 is modified to 4-hydroxyproline; partial. Intrachain disulfides connect Cys38–Cys101, Cys50–Cys114, and Cys100–Cys105. Glu41 bears the 4-carboxyglutamate mark. Positions 52–94 are cleaved as a propeptide — c peptide; the sequence is RKRNDAGEKRGRASPLWQRRGFLSKLKARAKRNGAFHLPRDGR. Residue Glu98 is modified to 4-carboxyglutamate. At Pro104 the chain carries 4-hydroxyproline; partial. Position 109 is a 4-carboxyglutamate; partial (Glu109). Residue Cys114 is modified to Cysteine amide.

Belongs to the insulin family. In terms of assembly, heterodimer of A and B chains; disulfide-linked. As to expression, expressed by the venom gland.

It localises to the secreted. This venom insulin, from a fish-hunting cone snail, facilitates prey capture by rapidly inducing hypoglycemic shock. It is one of the smallest known insulin found in nature and lacks the C-terminal segment of the B chain that, in human insulin, mediates engagement of the insulin receptor (INSR) and assembly of the hormone's hexameric storage form. Despite lacking this segment, it both binds and activates human insulin receptor (long isoform (HIR-B) of INSR) with only a 10-fold lower potency. In vivo, intraperitoneal injection of this peptide into zebrafish lowers blood glucose with the same potency than human insulin. In addition, when applied to water, this peptide reduces overall locomotor activity of zebrafish larvae, observed as a significant decrease in the percentage of time spent swimming and movement frequency. The sequence is that of Con-Ins G1b from Conus geographus (Geography cone).